Consider the following 615-residue polypeptide: Nuclear cap-binding protein subunit 3 (615 aa).

Residue K12 forms a Glycyl lysine isopeptide (Lys-Gly) (interchain with G-Cter in SUMO2) linkage. Over residues 15–27 the composition is skewed to low complexity; that stretch reads APAGPALGLPSPE. A disordered region spans residues 15 to 43; the sequence is APAGPALGLPSPEVESGLERGEPEPMEVE. Residue S25 is modified to Phosphoserine. K70 participates in a covalent cross-link: Glycyl lysine isopeptide (Lys-Gly) (interchain with G-Cter in SUMO2). The residue at position 73 (S73) is a Phosphoserine. The interval 126–187 is RNA recognition motif (RRM) domain; the sequence is ETIYICGVDE…MSSLPAQDKM (62 aa). Residues 155-158 carry the WLDD motif; essential for 7-methylguanosine-containing mRNA cap binding motif; sequence WLDD. 2 disordered regions span residues 182-233 and 332-400; these read PAQD…LDTL and HSGL…MDYD. Residues 185-208 are compositionally biased toward basic and acidic residues; it reads DKMRSRDASEDKSSEKNKKDKQED. K186 is covalently cross-linked (Glycyl lysine isopeptide (Lys-Gly) (interchain with G-Cter in SUMO2)). A phosphoserine mark is found at S209 and S210. Composition is skewed to acidic residues over residues 209–230 and 341–360; these read SSDDDETEEGEVEDENSSDVEL and EPIEEEEEEEEEEEDQDMDA. Basic and acidic residues predominate over residues 361–383; the sequence is DDRVVVEYHEELPGLKQPRERSL. At T408 the chain carries Phosphothreonine. S410 bears the Phosphoserine mark. 2 disordered regions span residues 430-454 and 467-615; these read SIRNPMRADSISTSNIKNRIGNKLP and EKRQ…EAES. The segment covering 506–516 has biased composition (basic and acidic residues); sequence VRREPSSDVHS. K536 is covalently cross-linked (Glycyl lysine isopeptide (Lys-Gly) (interchain with G-Cter in SUMO2)). 2 stretches are compositionally biased toward basic and acidic residues: residues 549–564 and 580–593; these read KTKEKNTKKVDHRASG and IKEKEESRQKKSRL. Residue S563 is modified to Phosphoserine. Over residues 606-615 the composition is skewed to low complexity; that stretch reads ESSSGSEAES. A Phosphoserine modification is found at S615.

The protein belongs to the NCBP3 family. In terms of assembly, component of an alternative cap-binding complex (CBC) composed of NCBP1/CBP80 and NCBP3. Interacts with SRRT, KPNA3, THOC5 and EIF4A3.

The protein resides in the nucleus. Its subcellular location is the cytoplasm. Associates with NCBP1/CBP80 to form an alternative cap-binding complex (CBC) which plays a key role in mRNA export. NCBP3 serves as adapter protein linking the capped RNAs (m7GpppG-capped RNA) to NCBP1/CBP80. Unlike the conventional CBC with NCBP2 which binds both small nuclear RNA (snRNA) and messenger (mRNA) and is involved in their export from the nucleus, the alternative CBC with NCBP3 does not bind snRNA and associates only with mRNA thereby playing a role in only mRNA export. The alternative CBC is particularly important in cellular stress situations such as virus infections and the NCBP3 activity is critical to inhibit virus growth. The sequence is that of Nuclear cap-binding protein subunit 3 from Mus musculus (Mouse).